The sequence spans 354 residues: UDP-N-acetylglucosamine--N-acetylmuramyl-(pentapeptide) pyrophosphoryl-undecaprenol N-acetylglucosamine transferase 3 (354 aa).

Residues 12-14 (TAG), Arg-163, Ser-193, and Gln-287 contribute to the UDP-N-acetyl-alpha-D-glucosamine site.

It belongs to the glycosyltransferase 28 family. MurG subfamily.

Its subcellular location is the cell membrane. It carries out the reaction di-trans,octa-cis-undecaprenyl diphospho-N-acetyl-alpha-D-muramoyl-L-alanyl-D-glutamyl-meso-2,6-diaminopimeloyl-D-alanyl-D-alanine + UDP-N-acetyl-alpha-D-glucosamine = di-trans,octa-cis-undecaprenyl diphospho-[N-acetyl-alpha-D-glucosaminyl-(1-&gt;4)]-N-acetyl-alpha-D-muramoyl-L-alanyl-D-glutamyl-meso-2,6-diaminopimeloyl-D-alanyl-D-alanine + UDP + H(+). It participates in cell wall biogenesis; peptidoglycan biosynthesis. Cell wall formation. Catalyzes the transfer of a GlcNAc subunit on undecaprenyl-pyrophosphoryl-MurNAc-pentapeptide (lipid intermediate I) to form undecaprenyl-pyrophosphoryl-MurNAc-(pentapeptide)GlcNAc (lipid intermediate II). The sequence is that of UDP-N-acetylglucosamine--N-acetylmuramyl-(pentapeptide) pyrophosphoryl-undecaprenol N-acetylglucosamine transferase 3 from Bacillus cereus (strain ATCC 14579 / DSM 31 / CCUG 7414 / JCM 2152 / NBRC 15305 / NCIMB 9373 / NCTC 2599 / NRRL B-3711).